A 424-amino-acid polypeptide reads, in one-letter code: Protein UL117 (424 aa).

The disordered stretch occupies residues 57–82; that stretch reads IVPTTSSSLAPPRDDERRPTPPLRPP.

This sequence belongs to the herpesviridae U84 family.

The protein resides in the host nucleus. Its function is as follows. Plays a role in the inhibition of host DNA replication in the infected cell. Targets the mini-chromosome maintenance (MCM) complex and blocks the accumulation of MCM proteins and their loading onto host chromatin. The sequence is that of Protein UL117 (UL117) from Human cytomegalovirus (strain AD169) (HHV-5).